A 444-amino-acid polypeptide reads, in one-letter code: Tubulin beta chain (444 aa).

8 residues coordinate GTP: glutamine 11, glutamate 69, serine 138, glycine 142, threonine 143, glycine 144, asparagine 204, and asparagine 226. Residue glutamate 69 participates in Mg(2+) binding.

This sequence belongs to the tubulin family. Dimer of alpha and beta chains. A typical microtubule is a hollow water-filled tube with an outer diameter of 25 nm and an inner diameter of 15 nM. Alpha-beta heterodimers associate head-to-tail to form protofilaments running lengthwise along the microtubule wall with the beta-tubulin subunit facing the microtubule plus end conferring a structural polarity. Microtubules usually have 13 protofilaments but different protofilament numbers can be found in some organisms and specialized cells. The cofactor is Mg(2+).

The protein resides in the cytoplasm. It is found in the cytoskeleton. Its function is as follows. Tubulin is the major constituent of microtubules, a cylinder consisting of laterally associated linear protofilaments composed of alpha- and beta-tubulin heterodimers. Microtubules grow by the addition of GTP-tubulin dimers to the microtubule end, where a stabilizing cap forms. Below the cap, tubulin dimers are in GDP-bound state, owing to GTPase activity of alpha-tubulin. This chain is Tubulin beta chain, found in Trichuris trichiura (Whipworm).